The chain runs to 312 residues: Isochorismatase (312 aa).

Residues 229-302 (VFTCENIRKQ…EWQKLLTTRS (74 aa)) form the Carrier domain. Serine 263 bears the O-(pantetheine 4'-phosphoryl)serine mark.

The protein belongs to the isochorismatase family.

It catalyses the reaction isochorismate + H2O = (2S,3S)-2,3-dihydroxy-2,3-dihydrobenzoate + pyruvate. Its pathway is siderophore biosynthesis; bacillibactin biosynthesis. The protein is Isochorismatase (dhbB) of Bacillus subtilis (strain 168).